We begin with the raw amino-acid sequence, 312 residues long: Dehydrin CAS31 (312 aa).

Disordered stretches follow at residues 1–88 (MSQY…HTGG) and 248–287 (GTEQNTYGTGTGTGHGTTGYGSTGTGHGTTGYGDEQHHGE). Residues 21–30 (PLTSQGQVDQ) are compositionally biased toward polar residues. Over residues 35-46 (ISGGGMTGATGH) the composition is skewed to gly residues. Positions 55 to 66 (HGVGVDQTTGFG) are enriched in low complexity. 2 stretches are compositionally biased toward gly residues: residues 67-88 (SNTGTGTGYGTHTGSGGTHTGG) and 256-278 (TGTGTGHGTTGYGSTGTGHGTTG).

The protein belongs to the plant dehydrin family. Interacts with the leghemoglobin LB120-1 in the cytoplasm; this interaction leads to LB120-1 protection from denaturation under thermal and drought stresses. In terms of tissue distribution, expressed in nodules and roots.

Its subcellular location is the cytoplasm. Functionally, intrinsically disordered protein acting as a chaperone. Ensures leghemoglobins (e.g. LB120-1) protection from denaturation under thermal and drought stresses to delay root nodule nitrogenase inactivation and subsequent nodule senescence, thus supporting symbiotic nitrogen fixation (SNF). The chain is Dehydrin CAS31 from Medicago truncatula (Barrel medic).